The chain runs to 102 residues: Nucleoid-associated protein BCc_301 (102 aa).

Belongs to the YbaB/EbfC family. In terms of assembly, homodimer.

It is found in the cytoplasm. The protein resides in the nucleoid. In terms of biological role, binds to DNA and alters its conformation. May be involved in regulation of gene expression, nucleoid organization and DNA protection. The sequence is that of Nucleoid-associated protein BCc_301 from Buchnera aphidicola subsp. Cinara cedri (strain Cc).